The primary structure comprises 1241 residues: High-affinity potassium transport protein (1241 aa).

2 consecutive transmembrane segments (helical) span residues 49-70 (NFIA…ILLY) and 78-98 (IDAL…TVDV). Asparagine 100 is a glycosylation site (N-linked (GlcNAc...) asparagine). Residues 107-127 (IILYIICCISTPIAVHSCLAF) form a helical membrane-spanning segment. 3 disordered regions span residues 162–241 (TART…SLDD), 253–316 (KYHG…TPED), and 329–570 (EGTA…QLQQ). Over residues 164 to 177 (RTMTKSKTGGTQRV) the composition is skewed to polar residues. Basic and acidic residues-rich tracts occupy residues 181-191 (GKSDKRDDFQE) and 199-214 (VNRD…HNSR). Residues 215 to 238 (DSNSNANTNSSNNNSINHNGSSGS) show a composition bias toward low complexity. N-linked (GlcNAc...) asparagine glycosylation is found at asparagine 223, asparagine 227, asparagine 233, asparagine 257, asparagine 274, asparagine 353, and asparagine 364. Composition is skewed to polar residues over residues 268-280 (NTAT…QKLK) and 345-365 (TDGT…TMNE). Positions 366-375 (SKIRIQDKGA) are enriched in basic and acidic residues. The segment covering 380 to 411 (DQDSVLHSSNSSACTSDEDSLPTNFGGTTPSL) has biased composition (polar residues). N-linked (GlcNAc...) asparagine glycosylation is found at asparagine 389 and asparagine 442. Basic residues-rich tracts occupy residues 446–455 (PPRKASKSKR) and 482–497 (HLPK…KRRL). Polar residues predominate over residues 498-509 (STGSIDKNSSSD). N-linked (GlcNAc...) asparagine glycosylation is found at asparagine 505 and asparagine 538. The span at 520 to 545 (NDDDDGNEGDNMEEYFADNESGDEDD) shows a compositional bias: acidic residues. The span at 561 to 570 (KQQQQHQLQQ) shows a compositional bias: low complexity. N-linked (GlcNAc...) asparagine glycosylation is found at asparagine 584, asparagine 660, asparagine 681, asparagine 691, and asparagine 741. Positions 677–714 (NSHRNGSEDVSSDSNETTYPLNGNNDHSQNDANGYPTY) are disordered. A compositionally biased stretch (polar residues) spans 684–708 (EDVSSDSNETTYPLNGNNDHSQNDA). 5 consecutive transmembrane segments (helical) span residues 784-806 (ILVV…WINL), 819-840 (VSPT…GLTL), 844-864 (SMMS…FIII), 868-888 (GFPI…PDLS), and 904-924 (CFTL…LVGL). Residue asparagine 925 is glycosylated (N-linked (GlcNAc...) asparagine). 2 consecutive transmembrane segments (helical) span residues 929 to 949 (WILF…SKGY) and 977 to 997 (SIQV…AISI). Residues 1011–1073 (YGEMGGKPED…ENENPNEEST (63 aa)) form a disordered region. Positions 1021–1041 (TDTEEDGDCDDEDDDNEEEES) are enriched in acidic residues. Over residues 1050–1062 (GKSKKETKKKKKR) the composition is skewed to basic residues. Transmembrane regions (helical) follow at residues 1084 to 1104 (QLSF…ICER) and 1117 to 1137 (VFTI…SLGY). N-linked (GlcNAc...) asparagine glycosylation is present at asparagine 1141. Residues 1222-1241 (DELKHKRSLSRSSKRSTKTN) are disordered. Residues 1226-1241 (HKRSLSRSSKRSTKTN) show a composition bias toward basic residues.

This sequence belongs to the TrkH potassium transport family.

Its subcellular location is the membrane. Its function is as follows. This protein is required for high-affinity potassium transport. The polypeptide is High-affinity potassium transport protein (TRK1) (Saccharomyces uvarum (Yeast)).